A 180-amino-acid chain; its full sequence is MKLLILCVMVHGLLAEGPGQVLWKEQVVAPEFLLDDREDIASNRNAFFYEDKRSFRPEGLGEQVKRIAGAEDVGLQPRLVTRSLQCTCETEYEYRNLGEGHYPRYLTTSHCKPKACQNKFNSCRLLYYKVHILSQRDLNGLSDDRYSDDSETETPLPEALRHKWQLKPMKIPVACVPATG.

The signal sequence occupies residues 1–15; that stretch reads MKLLILCVMVHGLLA. Positions 16-64 are excised as a propeptide; that stretch reads EGPGQVLWKEQVVAPEFLLDDREDIASNRNAFFYEDKRSFRPEGLGEQV. 2 disulfide bridges follow: C88/C123 and C111/C175.

Homodimer; disulfide-linked.

It localises to the secreted. In terms of biological role, PTTH is a brain secretory polypeptide of insects which stimulates the prothoracic glands to produce and release ecdysone, the steroid essential to insect development. This is Prothoracicotropic hormone from Camponotus floridanus (Florida carpenter ant).